The following is a 195-amino-acid chain: ATP-dependent Clp protease proteolytic subunit (195 aa).

Residue Ser-101 is the Nucleophile of the active site. The active site involves His-126.

This sequence belongs to the peptidase S14 family.

It is found in the plastid. It localises to the chloroplast stroma. The enzyme catalyses Hydrolysis of proteins to small peptides in the presence of ATP and magnesium. alpha-casein is the usual test substrate. In the absence of ATP, only oligopeptides shorter than five residues are hydrolyzed (such as succinyl-Leu-Tyr-|-NHMec, and Leu-Tyr-Leu-|-Tyr-Trp, in which cleavage of the -Tyr-|-Leu- and -Tyr-|-Trp bonds also occurs).. Its function is as follows. Cleaves peptides in various proteins in a process that requires ATP hydrolysis. Has a chymotrypsin-like activity. Plays a major role in the degradation of misfolded proteins. This Bigelowiella natans (Pedinomonas minutissima) protein is ATP-dependent Clp protease proteolytic subunit.